The following is a 326-amino-acid chain: UDP-3-O-acylglucosamine N-acyltransferase (326 aa).

H233 functions as the Proton acceptor in the catalytic mechanism.

It belongs to the transferase hexapeptide repeat family. LpxD subfamily. Homotrimer.

The enzyme catalyses a UDP-3-O-[(3R)-3-hydroxyacyl]-alpha-D-glucosamine + a (3R)-hydroxyacyl-[ACP] = a UDP-2-N,3-O-bis[(3R)-3-hydroxyacyl]-alpha-D-glucosamine + holo-[ACP] + H(+). It functions in the pathway bacterial outer membrane biogenesis; LPS lipid A biosynthesis. Functionally, catalyzes the N-acylation of UDP-3-O-acylglucosamine using 3-hydroxyacyl-ACP as the acyl donor. Is involved in the biosynthesis of lipid A, a phosphorylated glycolipid that anchors the lipopolysaccharide to the outer membrane of the cell. This chain is UDP-3-O-acylglucosamine N-acyltransferase, found in Aquifex aeolicus (strain VF5).